A 204-amino-acid polypeptide reads, in one-letter code: Cytochrome c biogenesis ATP-binding export protein CcmA (204 aa).

The region spanning 2–204 is the ABC transporter domain; sequence IEVRDLGVSR…LDAEDLGGFL (203 aa). 34–41 contacts ATP; sequence GPNGIGKT.

The protein belongs to the ABC transporter superfamily. CcmA exporter (TC 3.A.1.107) family. As to quaternary structure, the complex is composed of two ATP-binding proteins (CcmA) and two transmembrane proteins (CcmB).

The protein resides in the cell inner membrane. The catalysed reaction is heme b(in) + ATP + H2O = heme b(out) + ADP + phosphate + H(+). Functionally, part of the ABC transporter complex CcmAB involved in the biogenesis of c-type cytochromes; once thought to export heme, this seems not to be the case, but its exact role is uncertain. Responsible for energy coupling to the transport system. The sequence is that of Cytochrome c biogenesis ATP-binding export protein CcmA from Ruegeria sp. (strain TM1040) (Silicibacter sp.).